Consider the following 636-residue polypeptide: Plasma kallikrein (636 aa).

Residues 1–19 (MIALRQAAYFICLFATVSC) form the signal peptide. Apple domains follow at residues 21 to 104 (CLTQ…LKRC), 111 to 194 (CHRS…LKAC), 201 to 284 (CRVD…LLTC), and 294 to 377 (CHSK…LRLC). 12 disulfides stabilise this stretch: C21–C104, C47–C77, C51–C57, C111–C194, C137–C166, C141–C147, C201–C284, C227–C256, C231–C237, C294–C377, C320–C349, and C324–C330. N66 and N127 each carry an N-linked (GlcNAc...) asparagine glycan. Residues N361 and N397 are each glycosylated (N-linked (GlcNAc...) asparagine). The region spanning 392–627 (IVGGTNASWG…YVDWILEKTQ (236 aa)) is the Peptidase S1 domain. A disulfide bridge links C420 with C436. H435 (charge relay system) is an active-site residue. N454 carries an N-linked (GlcNAc...) asparagine glycan. The active-site Charge relay system is D484. N-linked (GlcNAc...) asparagine glycosylation occurs at N495. Disulfide bonds link C518-C585, C549-C564, and C575-C603. The active-site Charge relay system is the S579.

This sequence belongs to the peptidase S1 family. Plasma kallikrein subfamily. Forms a heterodimer with SERPINA5. The zymogen is activated by factor XIIa, which cleaves the molecule into a light chain, which contains the active site, and a heavy chain, which associates with HMW kininogen. These chains are linked by one or more disulfide bonds.

It is found in the secreted. It catalyses the reaction Cleaves selectively Arg-|-Xaa and Lys-|-Xaa bonds, including Lys-|-Arg and Arg-|-Ser bonds in (human) kininogen to release bradykinin.. With respect to regulation, inhibited by SERPINA5. In terms of biological role, the enzyme cleaves Lys-Arg and Arg-Ser bonds. It activates, in a reciprocal reaction, factor XII after its binding to a negatively charged surface. It also releases bradykinin from HMW kininogen and may also play a role in the renin-angiotensin system by converting prorenin into renin. The protein is Plasma kallikrein (KLKB1) of Bos taurus (Bovine).